The sequence spans 128 residues: MKKMLVEFRDFALKGNVLDLAVAVVIGAAFGKIVSSLVNNIIMPFVGVLLGGLDFSDLSFKVGKSVIQYGAFIQSIVDFVIIAFAIFIFVKVLTSFIKKKEQPTEETPVPPTEEYLKEIRDLLKEQQK.

2 helical membrane passes run 11 to 31 (FALK…AAFG) and 70 to 90 (GAFI…FIFV).

Belongs to the MscL family. Homopentamer.

Its subcellular location is the cell membrane. In terms of biological role, channel that opens in response to stretch forces in the membrane lipid bilayer. May participate in the regulation of osmotic pressure changes within the cell. The polypeptide is Large-conductance mechanosensitive channel (Listeria innocua serovar 6a (strain ATCC BAA-680 / CLIP 11262)).